The sequence spans 105 residues: Thiosulfate sulfurtransferase GlpE (105 aa).

The region spanning 15 to 103 (MQQGAILVDI…WCRAELPIDT (89 aa)) is the Rhodanese domain. Catalysis depends on Cys63, which acts as the Cysteine persulfide intermediate.

It belongs to the GlpE family.

Its subcellular location is the cytoplasm. The enzyme catalyses thiosulfate + hydrogen cyanide = thiocyanate + sulfite + 2 H(+). It catalyses the reaction thiosulfate + [thioredoxin]-dithiol = [thioredoxin]-disulfide + hydrogen sulfide + sulfite + 2 H(+). Its function is as follows. Transferase that catalyzes the transfer of sulfur from thiosulfate to thiophilic acceptors such as cyanide or dithiols. May function in a CysM-independent thiosulfate assimilation pathway by catalyzing the conversion of thiosulfate to sulfite, which can then be used for L-cysteine biosynthesis. This Haemophilus influenzae (strain 86-028NP) protein is Thiosulfate sulfurtransferase GlpE.